We begin with the raw amino-acid sequence, 387 residues long: 3-ketoacyl-CoA thiolase (387 aa).

Catalysis depends on Cys91, which acts as the Acyl-thioester intermediate. Active-site proton acceptor residues include His343 and Cys373.

It belongs to the thiolase-like superfamily. Thiolase family. As to quaternary structure, heterotetramer of two alpha chains (FadB) and two beta chains (FadA).

It localises to the cytoplasm. It catalyses the reaction an acyl-CoA + acetyl-CoA = a 3-oxoacyl-CoA + CoA. Its pathway is lipid metabolism; fatty acid beta-oxidation. Functionally, catalyzes the final step of fatty acid oxidation in which acetyl-CoA is released and the CoA ester of a fatty acid two carbons shorter is formed. Involved in the aerobic and anaerobic degradation of long-chain fatty acids. In Escherichia coli O6:H1 (strain CFT073 / ATCC 700928 / UPEC), this protein is 3-ketoacyl-CoA thiolase.